The primary structure comprises 231 residues: ATP phosphoribosyltransferase (231 aa).

It belongs to the ATP phosphoribosyltransferase family. Short subfamily. As to quaternary structure, heteromultimer composed of HisG and HisZ subunits.

It localises to the cytoplasm. It catalyses the reaction 1-(5-phospho-beta-D-ribosyl)-ATP + diphosphate = 5-phospho-alpha-D-ribose 1-diphosphate + ATP. The protein operates within amino-acid biosynthesis; L-histidine biosynthesis; L-histidine from 5-phospho-alpha-D-ribose 1-diphosphate: step 1/9. Functionally, catalyzes the condensation of ATP and 5-phosphoribose 1-diphosphate to form N'-(5'-phosphoribosyl)-ATP (PR-ATP). Has a crucial role in the pathway because the rate of histidine biosynthesis seems to be controlled primarily by regulation of HisG enzymatic activity. The polypeptide is ATP phosphoribosyltransferase (hisG) (Rhizobium meliloti (strain 1021) (Ensifer meliloti)).